Reading from the N-terminus, the 106-residue chain is ATP-dependent Clp protease adapter protein ClpS (106 aa).

Belongs to the ClpS family. As to quaternary structure, binds to the N-terminal domain of the chaperone ClpA.

Its function is as follows. Involved in the modulation of the specificity of the ClpAP-mediated ATP-dependent protein degradation. The protein is ATP-dependent Clp protease adapter protein ClpS of Enterobacter sp. (strain 638).